A 906-amino-acid chain; its full sequence is Protein translocase subunit SecA (906 aa).

ATP-binding positions include Gln-86, 104–108 (GEGKT), and Asp-511. Basic and acidic residues-rich tracts occupy residues 853–865 (HESV…RHDE) and 877–888 (VRREGPKVKRND). Residues 853-906 (HESVIDNNQRHDEDEQEEAPKVQQVRREGPKVKRNDPCPCGSGKKYKQCHSKVE) are disordered. 4 residues coordinate Zn(2+): Cys-890, Cys-892, Cys-901, and His-902. A compositionally biased stretch (basic residues) spans 896–906 (KKYKQCHSKVE).

The protein belongs to the SecA family. As to quaternary structure, monomer and homodimer. Part of the essential Sec protein translocation apparatus which comprises SecA, SecYEG and auxiliary proteins SecDF-YajC and YidC. The cofactor is Zn(2+).

The protein resides in the cell inner membrane. It is found in the cytoplasm. The catalysed reaction is ATP + H2O + cellular proteinSide 1 = ADP + phosphate + cellular proteinSide 2.. Part of the Sec protein translocase complex. Interacts with the SecYEG preprotein conducting channel. Has a central role in coupling the hydrolysis of ATP to the transfer of proteins into and across the cell membrane, serving both as a receptor for the preprotein-SecB complex and as an ATP-driven molecular motor driving the stepwise translocation of polypeptide chains across the membrane. The sequence is that of Protein translocase subunit SecA from Francisella tularensis subsp. tularensis (strain WY96-3418).